Consider the following 126-residue polypeptide: Small ribosomal subunit protein uS12c (126 aa).

Belongs to the universal ribosomal protein uS12 family. Part of the 30S ribosomal subunit.

It is found in the plastid. It localises to the chloroplast. With S4 and S5 plays an important role in translational accuracy. Located at the interface of the 30S and 50S subunits. The protein is Small ribosomal subunit protein uS12c (rps12) of Trieres chinensis (Marine centric diatom).